Consider the following 163-residue polypeptide: Cyclic pyranopterin monophosphate synthase (163 aa).

Substrate-binding positions include 79–81 (LCH) and 117–118 (ME). Asp132 is an active-site residue.

This sequence belongs to the MoaC family. In terms of assembly, homohexamer; trimer of dimers.

The catalysed reaction is (8S)-3',8-cyclo-7,8-dihydroguanosine 5'-triphosphate = cyclic pyranopterin phosphate + diphosphate. It participates in cofactor biosynthesis; molybdopterin biosynthesis. Catalyzes the conversion of (8S)-3',8-cyclo-7,8-dihydroguanosine 5'-triphosphate to cyclic pyranopterin monophosphate (cPMP). In Chloroflexus aurantiacus (strain ATCC 29366 / DSM 635 / J-10-fl), this protein is Cyclic pyranopterin monophosphate synthase.